The following is a 122-amino-acid chain: uncharacterized protein (122 aa).

An N-terminal signal peptide occupies residues 1-33; that stretch reads MASTVAGLSMSAESLRLPLLIGVSSGMLSVSDA.

This is an uncharacterized protein from Saccharomyces cerevisiae (strain ATCC 204508 / S288c) (Baker's yeast).